The sequence spans 237 residues: Protein YIPF4 (237 aa).

Residues 1-106 (MQFSPTNGDF…FNRQVVRDNP (106 aa)) lie on the Cytoplasmic side of the membrane. Residues 107 to 127 (DFWGPLAVVLLFSMISIYGQF) traverse the membrane as a helical segment. The Lumenal portion of the chain corresponds to 128–131 (RVVS). Residues 132–152 (WIITIWIFGSLTIFLLARVLG) traverse the membrane as a helical segment. At 153 to 160 (GEVSYGQV) the chain is on the cytoplasmic side. The helical transmembrane segment at 161–181 (LGVIGYSLLPLIVIAPLLLVI) threads the bilayer. The Lumenal portion of the chain corresponds to 182–188 (GGFEVVS). Residues 189 to 209 (TLIKLFGVFWAAYSAASLLVG) traverse the membrane as a helical segment. Residues 210–216 (DEFKTKK) are Cytoplasmic-facing. Residues 217 to 237 (PLLIYPIFLLYIYFLSLYTGV) traverse the membrane as a helical segment.

Belongs to the YIP1 family.

The protein localises to the golgi apparatus. It is found in the cis-Golgi network membrane. Its function is as follows. Involved in the maintenance of the Golgi structure. In Danio rerio (Zebrafish), this protein is Protein YIPF4 (yipf4).